Reading from the N-terminus, the 208-residue chain is Small ribosomal subunit protein uS4 (208 aa).

Residues 98–161 (QRLDNVVFRM…KSNPQVVRAL (64 aa)) form the S4 RNA-binding domain.

This sequence belongs to the universal ribosomal protein uS4 family. Part of the 30S ribosomal subunit. Contacts protein S5. The interaction surface between S4 and S5 is involved in control of translational fidelity.

Functionally, one of the primary rRNA binding proteins, it binds directly to 16S rRNA where it nucleates assembly of the body of the 30S subunit. In terms of biological role, with S5 and S12 plays an important role in translational accuracy. The sequence is that of Small ribosomal subunit protein uS4 from Aliarcobacter butzleri (strain RM4018) (Arcobacter butzleri).